Here is a 261-residue protein sequence, read N- to C-terminus: Tryptophan synthase alpha chain (261 aa).

Residues Glu-49 and Asp-60 each act as proton acceptor in the active site.

The protein belongs to the TrpA family. In terms of assembly, tetramer of two alpha and two beta chains.

The catalysed reaction is (1S,2R)-1-C-(indol-3-yl)glycerol 3-phosphate + L-serine = D-glyceraldehyde 3-phosphate + L-tryptophan + H2O. The protein operates within amino-acid biosynthesis; L-tryptophan biosynthesis; L-tryptophan from chorismate: step 5/5. The alpha subunit is responsible for the aldol cleavage of indoleglycerol phosphate to indole and glyceraldehyde 3-phosphate. The chain is Tryptophan synthase alpha chain from Leifsonia xyli subsp. xyli (strain CTCB07).